The sequence spans 1095 residues: Solute carrier family 12 member 1 (1095 aa).

Topologically, residues 1 to 173 are cytoplasmic; that stretch reads MSVSIPSNSV…EEDMTGVVKF (173 aa). The short motif at 16 to 19 is the RFXV motif element; it reads RFQV. The interval 29–49 is disordered; the sequence is AAAVGDSADPPHYEETSFGDE. 2 positions are modified to phosphoserine: serine 57 and serine 87. Threonine 91, threonine 96, threonine 101, and threonine 114 each carry phosphothreonine. Phosphoserine is present on serine 116. Serine 126 carries the phosphoserine; by AMPK modification. A Phosphoserine modification is found at serine 144. A helical transmembrane segment spans residues 174–194; that stretch reads GWVKGVLVRCMLNIWGVMLFI. Over 195–197 the chain is Extracellular; sequence RLS. Residues 198-218 form a helical membrane-spanning segment; that stretch reads WIVGEAGIGLGVLIILLSTMV. The Cytoplasmic segment spans residues 219–255; the sequence is TSITGLSTSAIATNGFVRGGGAYYLISRSLGPEFGGS. A helical membrane pass occupies residues 256-276; that stretch reads IGLIFAFANAVAVAMYVVGFA. Over 277–298 the chain is Extracellular; it reads ETVVDLLKESDSMMVDPTNDIR. Residues 299–319 form a helical membrane-spanning segment; it reads IIGSITVVILLGISVAGMEWE. Topologically, residues 320–323 are cytoplasmic; it reads AKAQ. The chain crosses the membrane as a helical span at residues 324-344; that stretch reads VILLVILLIAIANFFIGTVIP. At 345–375 the chain is on the extracellular side; sequence SNNEKKSRGFFNYQASIFAENFGPSFTKGEG. The helical transmembrane segment at 376-396 threads the bilayer; sequence FFSVFAIFFPAATGILAGANI. The Cytoplasmic segment spans residues 397 to 413; sequence SGDLEDPQDAIPRGTML. The helical transmembrane segment at 414-434 threads the bilayer; it reads AIFITTVAYIGVAICVAACVV. The Extracellular segment spans residues 435–546; it reads RDATGSMNDT…NNEPLRGYFL (112 aa). 2 N-linked (GlcNAc...) asparagine glycosylation sites follow: asparagine 442 and asparagine 452. 2 consecutive transmembrane segments (helical) span residues 547–567 and 568–588; these read TFVIAMAFILIAELNVIAPII and SNFFLASYALINFSCFHASYA. The Extracellular portion of the chain corresponds to 589-605; it reads KSPGWRPAYGIYNMWVS. The helical transmembrane segment at 606-626 threads the bilayer; it reads LFGAILCCAVMFVINWWAAVI. Residues 627 to 1095 are Cytoplasmic-facing; sequence TYVIELFLYI…NHKNVLTFYS (469 aa).

This sequence belongs to the SLC12A transporter family. When phosphorylated, interacts with PPP3CB. Post-translationally, phosphorylated at Ser-87, Thr-96 and Thr-101 by OXSR1/OSR1 and STK39/SPAK downstream of WNK kinases (WNK1, WNK2, WNK3 or WNK4), promoting its activity. Short-term cyclosporine administration increases SLC12A1 phosphorylation in kidney thick ascending limb, possibly through the inhibition of PPP3CB/calcineurin A beta phosphatase. Predominantly expressed in kidney (at protein level). In terms of tissue distribution, kidney-specific; most highly expressed in the outer stripe of outer medulla (at protein level). As to expression, kidney-specific; most highly expressed in the cortical thick ascending limb (at protein level). Kidney-specific; most highly expressed in the inner stripe of outer medulla (at protein level).

It localises to the apical cell membrane. It carries out the reaction K(+)(out) + 2 chloride(out) + Na(+)(out) = K(+)(in) + 2 chloride(in) + Na(+)(in). With respect to regulation, activated following phosphorylation by OXSR1/OSR1 and STK39/SPAK downstream of WNK kinases (WNK1, WNK2, WNK3 or WNK4). Inhibited by mercury dichloride and diuretic drug bumetaide. Inactive in isotonic conditions. Renal sodium, potassium and chloride ion cotransporter that mediates the transepithelial NaCl reabsorption in the thick ascending limb and plays an essential role in the urinary concentration and volume regulation. Electrically silent transporter system. In terms of biological role, high affinity, high capacity cotransporter for sodium, potassium and chloride ions, with a coupling ratio 1Na(+):1K(+):2Cl(-). Functionally, high affinity, low capacity cotransporter for sodium, potassium and chloride ions, with a coupling ratio 1Na(+):1K(+):2Cl(-). Its function is as follows. Low affinity, low capacity cotransporter for sodium, potassium and chloride ions, with a coupling ratio 1Na(+):1K(+):2Cl(-). The sequence is that of Solute carrier family 12 member 1 (Slc12a1) from Mus musculus (Mouse).